The chain runs to 227 residues: Probable cytokinin riboside 5'-monophosphate phosphoribohydrolase LOGL9 (227 aa).

Polar residues predominate over residues 1–15 (MYISSPHTSHFTSID). Residues 1–26 (MYISSPHTSHFTSIDRSPAVVSESDR) are disordered. Substrate is bound by residues E117, 135–136 (RK), and 152–158 (GYGTLEE).

The protein belongs to the LOG family. In terms of tissue distribution, expressed in roots, leaves and stems.

The enzyme catalyses N(6)-(dimethylallyl)adenosine 5'-phosphate + H2O = N(6)-dimethylallyladenine + D-ribose 5-phosphate. It catalyses the reaction 9-ribosyl-trans-zeatin 5'-phosphate + H2O = trans-zeatin + D-ribose 5-phosphate. Cytokinin-activating enzyme working in the direct activation pathway. Phosphoribohydrolase that converts inactive cytokinin nucleotides to the biologically active free-base forms. The polypeptide is Probable cytokinin riboside 5'-monophosphate phosphoribohydrolase LOGL9 (LOGL9) (Oryza sativa subsp. japonica (Rice)).